The primary structure comprises 352 residues: MVLSLQTLAKKVLAGQRPTKCHPHFLKCYGLWWHNGPMIFDQNQKKIWSPIFTDGVHINAALVKAAAENNYDLIKLFTEWGANIDYSLLSVNTERTRDLCRELGAKEQLKQEEVLYYFNTIKRNLTSSNIILCHEVFSHNPILETINRTKLRGIIYEQLEALMENTDILSELLTKYWYGIAIEFNLTKAIHYFYQRYVHLHQWRLMYALFYNNVCDLHELYAKEKIRMDMDEMLKWACRKNYNYLTIYYCCIVLGADINQAMFHSIQFYNIGNMFFCIDLGANAIEEGKTLALQKDKSFIASLLSINCYSMNDSLSLKETDPEVIKRMLKDYHSKNMSIAHKYYIKHGFNDI.

This sequence belongs to the asfivirus MGF 360 family. In terms of assembly, interacts with host STAT1; this interaction mediates STAT1 degradation through apoptosis. Interacts with host STAT2; this interaction mediates STAT2 degradation through the proteasome.

The protein localises to the host cytoplasm. Functionally, plays a role in virus cell tropism, and may be required for efficient virus replication in macrophages. In addition, inhibits IFN-beta-induced IFN-stimulated genes (ISGs) transcription. Mechanistically, degrades host STAT1 and STAT2 through apoptosis and ubiquitin-proteasome pathways respectively. The protein is Protein MGF 360-9L of Ornithodoros (relapsing fever ticks).